Reading from the N-terminus, the 335-residue chain is MRN complex-interacting protein (335 aa).

2 disordered regions span residues 75–102 (EEAV…PSKP) and 118–194 (QELD…ALST). Ser100 bears the Phosphoserine mark. Over residues 129–142 (TQLSTSAERPSSPA) the composition is skewed to polar residues. The Nuclear localization signal (NLS) signature appears at 145 to 148 (RKRK). Residues 177–194 (STGLFGTEQQGTSPALST) are compositionally biased toward polar residues. The segment at 203-230 (FPRWKLPSPVTQVNAPSSKWARFLLAPG) is necessary for the association with the MRN complex. Positions 273–335 (RPPQAIHTTT…TTGEDFDDDL (63 aa)) are disordered. The span at 286–297 (DRPDRKTREQPR) shows a compositional bias: basic and acidic residues.

Belongs to the MRNIP family. Associates with the MRE11-RAD50-NBN (MRN) damage-sensing complex; this association is constitutive. Interacts with MRE11. Interacts with NBN. Interacts with RAD50. In terms of processing, phosphorylated; phosphorylation is constitutive and occurs in the absence of any DNA-damaging stimulus. Phosphorylation is necessary for its nuclear retention.

The protein resides in the nucleus. The protein localises to the nucleoplasm. Plays a role in the cellular response to DNA damage and the maintenance of genome stability through its association with the MRN damage-sensing complex. Promotes chromatin loading and activity of the MRN complex to facilitate subsequent ATM-mediated DNA damage response signaling and DNA repair. The chain is MRN complex-interacting protein from Mus musculus (Mouse).